Here is a 287-residue protein sequence, read N- to C-terminus: 2-dehydro-3-deoxyphosphooctonate aldolase (287 aa).

The protein belongs to the KdsA family.

The protein resides in the cytoplasm. It carries out the reaction D-arabinose 5-phosphate + phosphoenolpyruvate + H2O = 3-deoxy-alpha-D-manno-2-octulosonate-8-phosphate + phosphate. It functions in the pathway carbohydrate biosynthesis; 3-deoxy-D-manno-octulosonate biosynthesis; 3-deoxy-D-manno-octulosonate from D-ribulose 5-phosphate: step 2/3. Its pathway is bacterial outer membrane biogenesis; lipopolysaccharide biosynthesis. This chain is 2-dehydro-3-deoxyphosphooctonate aldolase, found in Rhodopseudomonas palustris (strain BisB5).